Consider the following 1017-residue polypeptide: Stereoselective keto-reductase af490 (1017 aa).

Positions 6–138 (NELSGSQVPG…GRLRMTFAGH (133 aa)) are N-terminal hotdog fold. Residues 6–311 (NELSGSQVPG…MSPIAPSTEK (306 aa)) form the PKS/mFAS DH domain. Residues 8–306 (LSGSQVPGAT…LEGLTMSPIA (299 aa)) form a dehydratase (DH) region. Residues 153 to 311 (LRPVSISPFY…MSPIAPSTEK (159 aa)) form a C-terminal hotdog fold region. Positions 532-720 (QIRFLRAPFD…VQGGRLLIPR (189 aa)) are ketoreductase (KR).

It catalyses the reaction fumagillol + NADP(+) = 5-dehydrofumagillol + NADPH + H(+). The protein operates within secondary metabolite biosynthesis; terpenoid biosynthesis. Its function is as follows. Stereoselective keto-reductase; part of the gene cluster that mediates the biosynthesis of fumagillin, a meroterpenoid that has numerous biological activities including irreversible inhibition of human type 2 methionine aminopeptidase (METAP2). Within the pathway, the keto-reductase af490 acts as a 5-dehydrofumagillol 5-reductase that stereoselectively reduces 5-keto-fumagillol to 5R-hydroxy-seco-sesquiterpene. The pathway begins with the conversion of farnesyl pyrophosphate (FPP) to beta-trans-bergamotene by the membrane-bound beta-trans-bergamotene synthase af520. The multifunctional cytochrome P450 monooxygenase af510 then converts beta-trans-bergamotene into 5-keto-demethoxyfumagillol via several oxydation steps. 5-keto-demethoxyfumagillol is then subjected to successive C-6 hydroxylation and O-methylation by the dioxygenase af480 and O-methyltransferase af390-400, respectively, to yield 5-keto-fumagillol, which is then stereoselectively reduced by the keto-reductase af490 to 5R-hydroxy-seco-sesquiterpene. The next step is the polyketide transferase af380-catalyzed transfer of a dodecapentaenoyl group synthesized by the polyketide synthase af370 onto 5R-hydroxy-seco-sesquiterpene which leads to the production of prefumagillin. Finally, oxidative cleavage by the monooxygenase af470 converts prefumagillin to fumagillin. The sequence is that of Stereoselective keto-reductase af490 from Aspergillus fumigatus (strain ATCC MYA-4609 / CBS 101355 / FGSC A1100 / Af293) (Neosartorya fumigata).